Reading from the N-terminus, the 304-residue chain is Homoserine kinase (304 aa).

Residue P90 to S100 participates in ATP binding.

This sequence belongs to the GHMP kinase family. Homoserine kinase subfamily.

It is found in the cytoplasm. The enzyme catalyses L-homoserine + ATP = O-phospho-L-homoserine + ADP + H(+). The protein operates within amino-acid biosynthesis; L-threonine biosynthesis; L-threonine from L-aspartate: step 4/5. Its function is as follows. Catalyzes the ATP-dependent phosphorylation of L-homoserine to L-homoserine phosphate. This is Homoserine kinase from Staphylococcus aureus (strain MRSA252).